The primary structure comprises 475 residues: Ribulose bisphosphate carboxylase large chain (475 aa).

A propeptide spanning residues 1–2 is cleaved from the precursor; that stretch reads MS. N-acetylproline is present on Pro3. An N6,N6,N6-trimethyllysine modification is found at Lys14. Substrate-binding residues include Asn123 and Thr173. Residue Lys175 is the Proton acceptor of the active site. Substrate is bound at residue Lys177. Residues Lys201, Asp203, and Glu204 each contribute to the Mg(2+) site. Lys201 bears the N6-carboxylysine mark. Residue His294 is the Proton acceptor of the active site. Substrate contacts are provided by Arg295, His327, and Ser379.

Belongs to the RuBisCO large chain family. Type I subfamily. In terms of assembly, heterohexadecamer of 8 large chains and 8 small chains; disulfide-linked. The disulfide link is formed within the large subunit homodimers. The cofactor is Mg(2+). Post-translationally, the disulfide bond which can form in the large chain dimeric partners within the hexadecamer appears to be associated with oxidative stress and protein turnover.

Its subcellular location is the plastid. It localises to the chloroplast. The catalysed reaction is 2 (2R)-3-phosphoglycerate + 2 H(+) = D-ribulose 1,5-bisphosphate + CO2 + H2O. It carries out the reaction D-ribulose 1,5-bisphosphate + O2 = 2-phosphoglycolate + (2R)-3-phosphoglycerate + 2 H(+). Its function is as follows. RuBisCO catalyzes two reactions: the carboxylation of D-ribulose 1,5-bisphosphate, the primary event in carbon dioxide fixation, as well as the oxidative fragmentation of the pentose substrate in the photorespiration process. Both reactions occur simultaneously and in competition at the same active site. This chain is Ribulose bisphosphate carboxylase large chain, found in Amaranthus tricolor (Joseph's coat).